A 285-amino-acid chain; its full sequence is Bis(5'-nucleosyl)-tetraphosphatase, symmetrical (285 aa).

This sequence belongs to the Ap4A hydrolase family.

The enzyme catalyses P(1),P(4)-bis(5'-adenosyl) tetraphosphate + H2O = 2 ADP + 2 H(+). Its function is as follows. Hydrolyzes diadenosine 5',5'''-P1,P4-tetraphosphate to yield ADP. The protein is Bis(5'-nucleosyl)-tetraphosphatase, symmetrical of Pseudomonas entomophila (strain L48).